The following is a 227-amino-acid chain: Ribonuclease 3 (227 aa).

Residues 4–133 (FETLEKLLSY…LIAAIYLDSN (130 aa)) form the RNase III domain. Glu46 is a Mg(2+) binding site. The active site involves Asp50. Mg(2+)-binding residues include Asn119 and Glu122. Residue Glu122 is part of the active site. Residues 158–226 (DPKTALQEWA…ARSLLHRLKN (69 aa)) form the DRBM domain.

The protein belongs to the ribonuclease III family. As to quaternary structure, homodimer. Requires Mg(2+) as cofactor.

It is found in the cytoplasm. It carries out the reaction Endonucleolytic cleavage to 5'-phosphomonoester.. Digests double-stranded RNA. Involved in the processing of primary rRNA transcript to yield the immediate precursors to the large and small rRNAs (23S and 16S). Processes some mRNAs, and tRNAs when they are encoded in the rRNA operon. Processes pre-crRNA and tracrRNA of type II CRISPR loci if present in the organism. This Rickettsia massiliae (strain Mtu5) protein is Ribonuclease 3.